Reading from the N-terminus, the 263-residue chain is Expansin-like A3 (263 aa).

The first 20 residues, 1-20 (MRSFLYLIVVIFLFSSSVNA), serve as a signal peptide directing secretion. Residues 41–147 (SGACAYGPMA…QRVPCNYGKR (107 aa)) form the Expansin-like EG45 domain. N-linked (GlcNAc...) asparagine glycosylation is found at Asn-99 and Asn-102. The Expansin-like CBD domain occupies 161-243 (NYLAIKLLYQ…NWNSGRIYDA (83 aa)).

The protein belongs to the expansin family. Expansin-like A subfamily.

It is found in the secreted. The chain is Expansin-like A3 (EXLA3) from Arabidopsis thaliana (Mouse-ear cress).